An 89-amino-acid polypeptide reads, in one-letter code: Small ribosomal subunit protein uS15 (89 aa).

It belongs to the universal ribosomal protein uS15 family. In terms of assembly, part of the 30S ribosomal subunit. Forms a bridge to the 50S subunit in the 70S ribosome, contacting the 23S rRNA.

One of the primary rRNA binding proteins, it binds directly to 16S rRNA where it helps nucleate assembly of the platform of the 30S subunit by binding and bridging several RNA helices of the 16S rRNA. Functionally, forms an intersubunit bridge (bridge B4) with the 23S rRNA of the 50S subunit in the ribosome. This is Small ribosomal subunit protein uS15 from Bifidobacterium longum (strain DJO10A).